The following is an 86-amino-acid chain: Large ribosomal subunit protein uL23 (86 aa).

It belongs to the universal ribosomal protein uL23 family. As to quaternary structure, part of the 50S ribosomal subunit. Contacts protein L29.

Its function is as follows. Binds to 23S rRNA. One of the proteins that surrounds the polypeptide exit tunnel on the outside of the ribosome. This chain is Large ribosomal subunit protein uL23, found in Aeropyrum pernix (strain ATCC 700893 / DSM 11879 / JCM 9820 / NBRC 100138 / K1).